The sequence spans 479 residues: FAD-dependent monooxygenase ausM (479 aa).

3 residues coordinate FAD: Glu-40, Gly-54, and Arg-113. Residue Tyr-224 is part of the active site. Asn-289 carries an N-linked (GlcNAc...) asparagine glycan. FAD-binding residues include Asp-316 and Ala-329. A helical membrane pass occupies residues 449–469; the sequence is TLPWLVISLPVLASMLCYLVY.

The protein belongs to the paxM FAD-dependent monooxygenase family. FAD is required as a cofactor.

It localises to the membrane. It participates in secondary metabolite biosynthesis; terpenoid biosynthesis. In terms of biological role, FAD-dependent monooxygenase; part of the gene cluster B that mediates the biosynthesis of austinol and dehydroaustinol, two fungal meroterpenoids. The first step of the pathway is the synthesis of 3,5-dimethylorsellinic acid by the polyketide synthase ausA. 3,5-dimethylorsellinic acid is then prenylated by the polyprenyl transferase ausN. Further epoxidation by the FAD-dependent monooxygenase ausM and cyclization by the probable terpene cyclase ausL lead to the formation of protoaustinoid A. Protoaustinoid A is then oxidized to spiro-lactone preaustinoid A3 by the combined action of the FAD-binding monooxygenases ausB and ausC, and the dioxygenase ausE. Acid-catalyzed keto-rearrangement and ring contraction of the tetraketide portion of preaustinoid A3 by ausJ lead to the formation of preaustinoid A4. The aldo-keto reductase ausK, with the help of ausH, is involved in the next step by transforming preaustinoid A4 into isoaustinone which is in turn hydroxylated by the P450 monooxygenase ausI to form austinolide. Finally, the cytochrome P450 monooxygenase ausG modifies austinolide to austinol. Austinol can be further modified to dehydroaustinol which forms a diffusible complex with diorcinol that initiates conidiation. Due to genetic rearrangements of the clusters and the subsequent loss of some enzymes, the end products of the Emericella nidulans austinoid biosynthesis clusters are austinol and dehydroaustinol, even if additional enzymes, such as the O-acetyltransferase ausQ and the cytochrome P450 monooxygenase ausR are still functional. The sequence is that of FAD-dependent monooxygenase ausM from Emericella nidulans (strain FGSC A4 / ATCC 38163 / CBS 112.46 / NRRL 194 / M139) (Aspergillus nidulans).